The sequence spans 146 residues: Prostaglandin E synthase 3 (146 aa).

The CS domain maps to valine 1 to threonine 76. A disordered region spans residues serine 110–glutamate 146. A compositionally biased stretch (acidic residues) spans glycine 118 to aspartate 139.

It belongs to the p23/wos2 family. In terms of assembly, binds to telomerase. Binds to the progesterone receptor.

The protein resides in the cytoplasm. The enzyme catalyses prostaglandin H2 = prostaglandin E2. Its pathway is lipid metabolism; prostaglandin biosynthesis. In terms of biological role, molecular chaperone. The chain is Prostaglandin E synthase 3 (PTGES3) from Gallus gallus (Chicken).